Here is a 101-residue protein sequence, read N- to C-terminus: Growth-regulated alpha protein (101 aa).

The first 28 residues, 1–28, serve as a signal peptide directing secretion; that stretch reads MAPATRSLLRAPLLLLLLLLATSRLATG. Cystine bridges form between C37-C63 and C39-C79.

The protein belongs to the intercrine alpha (chemokine CxC) family.

The protein resides in the secreted. Has chemotactic activity for neutrophils. The polypeptide is Growth-regulated alpha protein (CXCL1) (Cricetulus griseus (Chinese hamster)).